The following is a 372-amino-acid chain: Protein RecA (372 aa).

Position 77–84 (77–84 (GPESSGKT)) interacts with ATP.

It belongs to the RecA family.

Its subcellular location is the cytoplasm. Can catalyze the hydrolysis of ATP in the presence of single-stranded DNA, the ATP-dependent uptake of single-stranded DNA by duplex DNA, and the ATP-dependent hybridization of homologous single-stranded DNAs. It interacts with LexA causing its activation and leading to its autocatalytic cleavage. The sequence is that of Protein RecA from Corynebacterium diphtheriae (strain ATCC 700971 / NCTC 13129 / Biotype gravis).